The following is a 162-amino-acid chain: Beta-lactoglobulin (162 aa).

Cystine bridges form between cysteine 66–cysteine 160, cysteine 106–cysteine 119, and cysteine 106–cysteine 121.

Belongs to the calycin superfamily. Lipocalin family. As to quaternary structure, under physiological conditions beta-lactoglobulin exists as an equilibrium mixture of monomeric and dimeric forms. Alternate disulfide bonds occur in equal amounts.

The protein resides in the secreted. Functionally, lactoglobulin is the primary component of whey, it binds retinol and is probably involved in the transport of that molecule. This is Beta-lactoglobulin (LGB) from Ovis aries musimon (Mouflon).